Here is a 371-residue protein sequence, read N- to C-terminus: 4-hydroxybenzoate polyprenyltransferase, mitochondrial (371 aa).

The transit peptide at 1–34 (MLGSRAAGFARGLRAVALAWLPGWRGRSFALARA) directs the protein to the mitochondrion. Over 35-83 (AGAPHGGDLQPPACPEPRGRQLSLSAAAVVDSAPRPLQPYLRLMRLDKP) the chain is Mitochondrial matrix. A helical transmembrane segment spans residues 84–104 (IGTWLLYLPCTWSIGLAAEPG). Over 105–108 (CFPD) the chain is Mitochondrial intermembrane. The helical transmembrane segment at 109–129 (WYMLSLFGTGAILMRGAGCTI) threads the bilayer. The Mitochondrial matrix portion of the chain corresponds to 130 to 148 (NDMWDQDYDKKVTRTANRP). Residues 149-169 (IAAGDISTFQSFVFLGGQLTL) traverse the membrane as a helical segment. Topologically, residues 170-172 (ALG) are mitochondrial intermembrane. The chain crosses the membrane as a helical span at residues 173–193 (VLLCLNYYSIALGAGSLLLVI). At 194 to 203 (TYPLMKRISY) the chain is on the mitochondrial matrix side. Residues 204–224 (WPQLALGLTFNWGALLGWSAI) traverse the membrane as a helical segment. At 225 to 231 (KGSCDPS) the chain is on the mitochondrial intermembrane side. A helical transmembrane segment spans residues 232–252 (VCLPLYFSGVMWTLIYDTIYA). The Mitochondrial matrix segment spans residues 253-277 (HQDKRDDVLIGLKSTALRFGENTKP). A helical membrane pass occupies residues 278 to 298 (WLSGFSVAMLGALSLVGVNSG). Topologically, residues 299-300 (QT) are mitochondrial intermembrane. A helical membrane pass occupies residues 301–321 (APYYAALGAVGAHLTHQIYTL). The Mitochondrial matrix portion of the chain corresponds to 322–332 (DIHRPEDCWNK). The chain crosses the membrane as a helical span at residues 333–353 (FISNRTLGLIVFLGIVLGNLW). Residues 354–371 (KEKKTDKTKKGIENKIEN) lie on the Mitochondrial intermembrane side of the membrane.

Belongs to the UbiA prenyltransferase family. Mg(2+) serves as cofactor. In terms of tissue distribution, widely expressed. Present in all of the tissues tested. Expressed at higher level in skeletal muscle, adrenal glands and the heart.

It localises to the mitochondrion inner membrane. The catalysed reaction is an all-trans-polyprenyl diphosphate + 4-hydroxybenzoate = a 4-hydroxy-3-(all-trans-polyprenyl)benzoate + diphosphate. The enzyme catalyses all-trans-decaprenyl diphosphate + 4-hydroxybenzoate = 4-hydroxy-3-(all-trans-decaprenyl)benzoate + diphosphate. It carries out the reaction all-trans-nonaprenyl diphosphate + 4-hydroxybenzoate = 4-hydroxy-3-(all-trans-nonaprenyl)benzoate + diphosphate. It participates in cofactor biosynthesis; ubiquinone biosynthesis. Its function is as follows. Mediates the second step in the final reaction sequence of coenzyme Q (CoQ) biosynthesis. Catalyzes the prenylation of para-hydroxybenzoate (PHB) with an all-trans polyprenyl donor (such as all-trans-decaprenyl diphosphate). The length of the polyprenyl side chain varies depending on the species, in humans, the side chain is comprised of 10 isoprenyls (decaprenyl) producing CoQ10 (also known as ubiquinone), whereas rodents predominantly generate CoQ9. However, this specificity is not complete, human tissues have low amounts of CoQ9 and rodent organs contain some CoQ10. Plays a central role in the biosynthesis of CoQ10. CoQ10 is a vital molecule that transports electrons from mitochondrial respiratory chain complexes. CoQs also function as cofactors for uncoupling protein and play a role as regulators of the extracellularly-induced ceramide-dependent apoptotic pathway. Regulates mitochondrial permeability transition pore (mPTP) opening and ROS production (pivotal events in cell death) in a tissue specific manner. The chain is 4-hydroxybenzoate polyprenyltransferase, mitochondrial from Homo sapiens (Human).